A 151-amino-acid polypeptide reads, in one-letter code: Probable cGMP 3',5'-cyclic phosphodiesterase subunit delta (151 aa).

It belongs to the PDE6D/unc-119 family. Interacts with Pde6.

The protein resides in the nucleus. It is found in the cytoplasm. This Aedes aegypti (Yellowfever mosquito) protein is Probable cGMP 3',5'-cyclic phosphodiesterase subunit delta.